The following is a 383-amino-acid chain: Protein COS5 (383 aa).

Topologically, residues 1-42 (MKENELKNEKSVDVLSFKQLESQKIVLPQDLFRSSFTWFCYE) are cytoplasmic. A helical transmembrane segment spans residues 43–63 (IYKSLAFPIWMLLWLPLSVWW). The Extracellular segment spans residues 64–72 (KLSNNCIYP). Residues 73 to 93 (LIVSLLVLFLGPIFVLVICGL) traverse the membrane as a helical segment. Residues 94–232 (SRKRSLSKQL…RSKLTWFLKR (139 aa)) lie on the Cytoplasmic side of the membrane. The helical transmembrane segment at 233–253 (IFTIYSLPLWLAFLNCICVSQ) threads the bilayer. A topological domain (extracellular) is located at residue His254. The helical transmembrane segment at 255–275 (FCLAFRILCPGLFFLMMVWLF) threads the bilayer. At 276–383 (QNMRTTALLV…SRNEESLMKK (108 aa)) the chain is on the cytoplasmic side.

It belongs to the DUP/COS family.

Its subcellular location is the membrane. This Saccharomyces cerevisiae (strain ATCC 204508 / S288c) (Baker's yeast) protein is Protein COS5 (COS5).